A 498-amino-acid polypeptide reads, in one-letter code: ATP synthase subunit beta, chloroplastic (498 aa).

Residue 172-179 (GGAGVGKT) coordinates ATP.

The protein belongs to the ATPase alpha/beta chains family. As to quaternary structure, F-type ATPases have 2 components, CF(1) - the catalytic core - and CF(0) - the membrane proton channel. CF(1) has five subunits: alpha(3), beta(3), gamma(1), delta(1), epsilon(1). CF(0) has four main subunits: a(1), b(1), b'(1) and c(9-12).

It localises to the plastid. The protein resides in the chloroplast thylakoid membrane. It catalyses the reaction ATP + H2O + 4 H(+)(in) = ADP + phosphate + 5 H(+)(out). Functionally, produces ATP from ADP in the presence of a proton gradient across the membrane. The catalytic sites are hosted primarily by the beta subunits. This Saccharum hybrid (Sugarcane) protein is ATP synthase subunit beta, chloroplastic.